Here is a 908-residue protein sequence, read N- to C-terminus: Protein translocase subunit SecA (908 aa).

Residues glutamine 87, 105 to 109 (GEGKT), and aspartate 512 contribute to the ATP site. Residues 882–908 (DGEKVGRNDPCPCGSGKKYKQCHGKLT) are disordered. Positions 892, 894, 903, and 904 each coordinate Zn(2+). A compositionally biased stretch (basic residues) spans 898–908 (KKYKQCHGKLT).

It belongs to the SecA family. As to quaternary structure, monomer and homodimer. Part of the essential Sec protein translocation apparatus which comprises SecA, SecYEG and auxiliary proteins SecDF-YajC and YidC. Zn(2+) serves as cofactor.

It is found in the cell inner membrane. Its subcellular location is the cytoplasm. The catalysed reaction is ATP + H2O + cellular proteinSide 1 = ADP + phosphate + cellular proteinSide 2.. In terms of biological role, part of the Sec protein translocase complex. Interacts with the SecYEG preprotein conducting channel. Has a central role in coupling the hydrolysis of ATP to the transfer of proteins into and across the cell membrane, serving both as a receptor for the preprotein-SecB complex and as an ATP-driven molecular motor driving the stepwise translocation of polypeptide chains across the membrane. This Shewanella amazonensis (strain ATCC BAA-1098 / SB2B) protein is Protein translocase subunit SecA.